The sequence spans 193 residues: Protein GrpE (193 aa).

The disordered stretch occupies residues 1-26 (MTKKHHKEQEEIQETIKTEAAEENVG). Over residues 7–20 (KEQEEIQETIKTEA) the composition is skewed to basic and acidic residues.

Belongs to the GrpE family. In terms of assembly, homodimer.

The protein localises to the cytoplasm. Functionally, participates actively in the response to hyperosmotic and heat shock by preventing the aggregation of stress-denatured proteins, in association with DnaK and GrpE. It is the nucleotide exchange factor for DnaK and may function as a thermosensor. Unfolded proteins bind initially to DnaJ; upon interaction with the DnaJ-bound protein, DnaK hydrolyzes its bound ATP, resulting in the formation of a stable complex. GrpE releases ADP from DnaK; ATP binding to DnaK triggers the release of the substrate protein, thus completing the reaction cycle. Several rounds of ATP-dependent interactions between DnaJ, DnaK and GrpE are required for fully efficient folding. In Chlorobaculum parvum (strain DSM 263 / NCIMB 8327) (Chlorobium vibrioforme subsp. thiosulfatophilum), this protein is Protein GrpE.